Here is a 450-residue protein sequence, read N- to C-terminus: UDP-N-acetylmuramoylalanine--D-glutamate ligase (450 aa).

115 to 121 contributes to the ATP binding site; sequence GTNGKTT.

This sequence belongs to the MurCDEF family.

Its subcellular location is the cytoplasm. The catalysed reaction is UDP-N-acetyl-alpha-D-muramoyl-L-alanine + D-glutamate + ATP = UDP-N-acetyl-alpha-D-muramoyl-L-alanyl-D-glutamate + ADP + phosphate + H(+). The protein operates within cell wall biogenesis; peptidoglycan biosynthesis. In terms of biological role, cell wall formation. Catalyzes the addition of glutamate to the nucleotide precursor UDP-N-acetylmuramoyl-L-alanine (UMA). This is UDP-N-acetylmuramoylalanine--D-glutamate ligase from Lachnospira eligens (strain ATCC 27750 / DSM 3376 / VPI C15-48 / C15-B4) (Eubacterium eligens).